The primary structure comprises 104 residues: UPF0235 protein Paes_1868 (104 aa).

The protein belongs to the UPF0235 family.

This Prosthecochloris aestuarii (strain DSM 271 / SK 413) protein is UPF0235 protein Paes_1868.